The chain runs to 448 residues: Cytoplasmic tRNA 2-thiolation protein 2 (448 aa).

Belongs to the CTU2/NCS2 family.

The protein localises to the cytoplasm. It participates in tRNA modification; 5-methoxycarbonylmethyl-2-thiouridine-tRNA biosynthesis. In terms of biological role, plays a central role in 2-thiolation of mcm(5)S(2)U at tRNA wobble positions of tRNA(Lys), tRNA(Glu) and tRNA(Gln). May act by forming a heterodimer with NCS6 that ligates sulfur from thiocarboxylated URM1 onto the uridine of tRNAs at wobble position. Prior mcm(5) tRNA modification by the elongator complex is required for 2-thiolation. May also be involved in protein urmylation. The chain is Cytoplasmic tRNA 2-thiolation protein 2 from Scheffersomyces stipitis (strain ATCC 58785 / CBS 6054 / NBRC 10063 / NRRL Y-11545) (Yeast).